The primary structure comprises 230 residues: Esterase OVCA2 (230 aa).

Active-site charge relay system residues include Ser-124, Asp-182, and His-209.

It belongs to the LovG family.

The enzyme catalyses a carboxylic ester + H2O = an alcohol + a carboxylate + H(+). Its function is as follows. Exhibits ester hydrolase activity with a strong preference for long-chain alkyl ester substrates and high selectivity against a variety of short, branched, and substituted esters. Is able to hydrolyze ester bonds within a wide range of p-nitrophenyl derivatives (C2-C14) in vitro, with a strong preference toward substrates of &gt;8 carbons. The polypeptide is Esterase OVCA2 (ovca2) (Xenopus tropicalis (Western clawed frog)).